A 158-amino-acid chain; its full sequence is SsrA-binding protein (158 aa).

Residues 131–158 are disordered; that stretch reads KQLHDKRQTEKERDWNKQKQRILQTNQR. The span at 132–147 shows a compositional bias: basic and acidic residues; that stretch reads QLHDKRQTEKERDWNK.

Belongs to the SmpB family.

It is found in the cytoplasm. Its function is as follows. Required for rescue of stalled ribosomes mediated by trans-translation. Binds to transfer-messenger RNA (tmRNA), required for stable association of tmRNA with ribosomes. tmRNA and SmpB together mimic tRNA shape, replacing the anticodon stem-loop with SmpB. tmRNA is encoded by the ssrA gene; the 2 termini fold to resemble tRNA(Ala) and it encodes a 'tag peptide', a short internal open reading frame. During trans-translation Ala-aminoacylated tmRNA acts like a tRNA, entering the A-site of stalled ribosomes, displacing the stalled mRNA. The ribosome then switches to translate the ORF on the tmRNA; the nascent peptide is terminated with the 'tag peptide' encoded by the tmRNA and targeted for degradation. The ribosome is freed to recommence translation, which seems to be the essential function of trans-translation. This is SsrA-binding protein from Teredinibacter turnerae (strain ATCC 39867 / T7901).